Consider the following 200-residue polypeptide: Large ribosomal subunit protein bL25 (200 aa).

Belongs to the bacterial ribosomal protein bL25 family. CTC subfamily. As to quaternary structure, part of the 50S ribosomal subunit; part of the 5S rRNA/L5/L18/L25 subcomplex. Contacts the 5S rRNA. Binds to the 5S rRNA independently of L5 and L18.

In terms of biological role, this is one of the proteins that binds to the 5S RNA in the ribosome where it forms part of the central protuberance. The polypeptide is Large ribosomal subunit protein bL25 (Corynebacterium glutamicum (strain ATCC 13032 / DSM 20300 / JCM 1318 / BCRC 11384 / CCUG 27702 / LMG 3730 / NBRC 12168 / NCIMB 10025 / NRRL B-2784 / 534)).